The primary structure comprises 295 residues: Acetylglutamate kinase (295 aa).

Substrate contacts are provided by residues 66 to 67 (GG), Arg-88, and Asn-193.

Belongs to the acetylglutamate kinase family. ArgB subfamily.

Its subcellular location is the cytoplasm. It carries out the reaction N-acetyl-L-glutamate + ATP = N-acetyl-L-glutamyl 5-phosphate + ADP. It functions in the pathway amino-acid biosynthesis; L-arginine biosynthesis; N(2)-acetyl-L-ornithine from L-glutamate: step 2/4. Catalyzes the ATP-dependent phosphorylation of N-acetyl-L-glutamate. This is Acetylglutamate kinase from Sinorhizobium fredii (strain NBRC 101917 / NGR234).